The following is a 633-amino-acid chain: Pentatricopeptide repeat-containing protein At1g43980, mitochondrial (633 aa).

Residues 1 to 30 (MFQLLRRAHGLCMPSSLYFSRLVNRSLLSK) constitute a mitochondrion transit peptide. 14 PPR repeats span residues 50-80 (TTYW…IPDK), 81-111 (NTIT…MPER), 112-146 (DVVS…EIRP), 147-178 (TEFT…GVSR), 180-210 (NLVV…MEDR), 211-245 (DVVS…EIQP), 246-280 (DEYT…GFLS), 281-311 (NSIV…LEKW), 312-346 (DSVL…SVRP), 347-380 (DKFT…GFDL), 381-411 (DTAV…TDGK), 412-447 (DLIF…SLKP), 448-483 (DRVT…GVNP), and 484-514 (GNEH…IPFE). The type E motif stretch occupies residues 519 to 594 (IWEPILCASL…AQGSSKISIE (76 aa)).

This sequence belongs to the PPR family. PCMP-E subfamily.

The protein resides in the mitochondrion. The polypeptide is Pentatricopeptide repeat-containing protein At1g43980, mitochondrial (PCMP-E58) (Arabidopsis thaliana (Mouse-ear cress)).